The primary structure comprises 263 residues: Caveolae-associated protein 3 (263 aa).

An interaction with CAVIN1 region spans residues M1–K84. Residues V20–L78 are leucine-zipper. S62 and S70 each carry phosphoserine. A Glycyl lysine isopeptide (Lys-Gly) (interchain with G-Cter in SUMO2) cross-link involves residue K128. Positions A135–Q203 are interaction with CAV1. The segment at A141–A263 is disordered. The span at Q157 to P170 shows a compositional bias: acidic residues. Phosphoserine is present on residues S165, S166, S173, and S199. A compositionally biased stretch (low complexity) spans E219–P234.

It belongs to the CAVIN family. As to quaternary structure, component of the CAVIN complex composed of CAVIN1, CAVIN2, CAVIN3 and CAVIN4. Interacts with PRKCD and with phosphatidylserine. Phosphatidylserine may form a bridge between PKC and PKC-binding partners and stabilize the binding. Interacts with PER2. Interacts with CAVIN1 and EPS15L1. Interacts (via leucine-zipper domain) with CAV1 in a cholesterol-sensitive manner. Post-translationally, in vitro, phosphorylated by PRKCD.

It localises to the cytoplasm. The protein resides in the membrane. The protein localises to the caveola. It is found in the cytosol. Its function is as follows. Regulates the traffic and/or budding of caveolae. Plays a role in caveola formation in a tissue-specific manner. Required for the formation of caveolae in smooth muscle but not in the lung and heart endothelial cells. Regulates the equilibrium between cell surface-associated and cell surface-dissociated caveolae by promoting the rapid release of caveolae from the cell surface. Plays a role in the regulation of the circadian clock. Modulates the period length and phase of circadian gene expression and also regulates expression and interaction of the core clock components PER1/2 and CRY1/2. Seems to have an immune potentiation function, especially in the glioma. The chain is Caveolae-associated protein 3 from Rattus norvegicus (Rat).